Reading from the N-terminus, the 430-residue chain is Adenylosuccinate synthetase (430 aa).

GTP-binding positions include 17–23 and 45–47; these read GDEGKGK and GHT. The Proton acceptor role is filled by Asp-18. Mg(2+) is bound by residues Asp-18 and Gly-45. Residues 18–21, 43–46, Thr-139, Arg-153, Asn-229, Thr-244, and Arg-308 each bind IMP; these read DEGK and NAGH. His-46 functions as the Proton donor in the catalytic mechanism. Residue 304 to 310 coordinates substrate; sequence TVTGRRR. GTP-binding positions include Arg-310, 336–338, and 418–420; these read KLD and GVG.

The protein belongs to the adenylosuccinate synthetase family. As to quaternary structure, homodimer. It depends on Mg(2+) as a cofactor.

It localises to the cytoplasm. The catalysed reaction is IMP + L-aspartate + GTP = N(6)-(1,2-dicarboxyethyl)-AMP + GDP + phosphate + 2 H(+). It participates in purine metabolism; AMP biosynthesis via de novo pathway; AMP from IMP: step 1/2. In terms of biological role, plays an important role in the de novo pathway and in the salvage pathway of purine nucleotide biosynthesis. Catalyzes the first committed step in the biosynthesis of AMP from IMP. This chain is Adenylosuccinate synthetase, found in Cryptococcus neoformans var. neoformans serotype D (strain B-3501A) (Filobasidiella neoformans).